The chain runs to 394 residues: Phosphopentomutase (394 aa).

Mn(2+)-binding residues include Asp-15, Asp-288, His-293, Asp-329, His-330, and His-341.

Belongs to the phosphopentomutase family. It depends on Mn(2+) as a cofactor.

Its subcellular location is the cytoplasm. The enzyme catalyses 2-deoxy-alpha-D-ribose 1-phosphate = 2-deoxy-D-ribose 5-phosphate. It catalyses the reaction alpha-D-ribose 1-phosphate = D-ribose 5-phosphate. Its pathway is carbohydrate degradation; 2-deoxy-D-ribose 1-phosphate degradation; D-glyceraldehyde 3-phosphate and acetaldehyde from 2-deoxy-alpha-D-ribose 1-phosphate: step 1/2. Functionally, isomerase that catalyzes the conversion of deoxy-ribose 1-phosphate (dRib-1-P) and ribose 1-phosphate (Rib-1-P) to deoxy-ribose 5-phosphate (dRib-5-P) and ribose 5-phosphate (Rib-5-P), respectively. The polypeptide is Phosphopentomutase (Bacillus licheniformis (strain ATCC 14580 / DSM 13 / JCM 2505 / CCUG 7422 / NBRC 12200 / NCIMB 9375 / NCTC 10341 / NRRL NRS-1264 / Gibson 46)).